The primary structure comprises 201 residues: 3-isopropylmalate dehydratase small subunit (201 aa).

The protein belongs to the LeuD family. LeuD type 1 subfamily. Heterodimer of LeuC and LeuD.

It carries out the reaction (2R,3S)-3-isopropylmalate = (2S)-2-isopropylmalate. It functions in the pathway amino-acid biosynthesis; L-leucine biosynthesis; L-leucine from 3-methyl-2-oxobutanoate: step 2/4. Functionally, catalyzes the isomerization between 2-isopropylmalate and 3-isopropylmalate, via the formation of 2-isopropylmaleate. The polypeptide is 3-isopropylmalate dehydratase small subunit (Rhodopseudomonas palustris (strain BisB18)).